The sequence spans 96 residues: MAGFRKENDEVWLDVYIQPKASRDQIQGWHGEELKIAITAPPVDGQANAHLIKFLAKQFKVAKSQIVIHKGELGRHKTVRITSPQQLPAILDQSAD.

The protein belongs to the UPF0235 family.

In Tolumonas auensis (strain DSM 9187 / NBRC 110442 / TA 4), this protein is UPF0235 protein Tola_0962.